Reading from the N-terminus, the 288-residue chain is 4-hydroxybenzoate octaprenyltransferase (288 aa).

8 helical membrane-spanning segments follow: residues 23–43 (IGSLLLLWPTLWALWLAGRGI), 46–66 (AKILVVFVLGVFFMRAAGCVV), 98–118 (ILFVVLILLSFGLVLTLNSMT), 141–161 (LPQVVLGAAFGWSIPMGFAAV), 163–183 (ESLPLVCWLLLLANICWTVAY), 213–233 (LIIGLLQLATLLLMVAIGWLM), 234–254 (NLGGAFYWSILLAGALFTHQQ), and 268–288 (AFLNNNYVGLILFLGILISYW).

The protein belongs to the UbiA prenyltransferase family. The cofactor is Mg(2+).

The protein localises to the cell inner membrane. The enzyme catalyses all-trans-octaprenyl diphosphate + 4-hydroxybenzoate = 4-hydroxy-3-(all-trans-octaprenyl)benzoate + diphosphate. It functions in the pathway cofactor biosynthesis; ubiquinone biosynthesis. Its function is as follows. Catalyzes the prenylation of para-hydroxybenzoate (PHB) with an all-trans polyprenyl group. Mediates the second step in the final reaction sequence of ubiquinone-8 (UQ-8) biosynthesis, which is the condensation of the polyisoprenoid side chain with PHB, generating the first membrane-bound Q intermediate 3-octaprenyl-4-hydroxybenzoate. This Yersinia pseudotuberculosis serotype O:1b (strain IP 31758) protein is 4-hydroxybenzoate octaprenyltransferase.